A 205-amino-acid chain; its full sequence is ATP phosphoribosyltransferase (205 aa).

The protein belongs to the ATP phosphoribosyltransferase family. Short subfamily. In terms of assembly, heteromultimer composed of HisG and HisZ subunits.

Its subcellular location is the cytoplasm. It carries out the reaction 1-(5-phospho-beta-D-ribosyl)-ATP + diphosphate = 5-phospho-alpha-D-ribose 1-diphosphate + ATP. It functions in the pathway amino-acid biosynthesis; L-histidine biosynthesis; L-histidine from 5-phospho-alpha-D-ribose 1-diphosphate: step 1/9. In terms of biological role, catalyzes the condensation of ATP and 5-phosphoribose 1-diphosphate to form N'-(5'-phosphoribosyl)-ATP (PR-ATP). Has a crucial role in the pathway because the rate of histidine biosynthesis seems to be controlled primarily by regulation of HisG enzymatic activity. This Nitratiruptor sp. (strain SB155-2) protein is ATP phosphoribosyltransferase.